A 203-amino-acid chain; its full sequence is MRLRNNKNAKLELESCENVIKNFPFKVEKNSTLEIGMGKGQMLIELAQKNPQKIFVGIEKYPTVALIAAKKAKKLELNNFFIIVDDVENALDFFEGTFDLIWLTFSDPWPKKRHYKRRLTYEKFLKIYSKILSENGLIKLKTDNDDFFQWTLESLEKNGLNIINKTSDLEKSEFAKDNVKTSYEQKFVSLGKNINFVEFSFKK.

The S-adenosyl-L-methionine site is built by E34, E59, D86, and D107. Residue D107 is part of the active site. Residues K111, D143, and 181–184 (TSYE) contribute to the substrate site.

Belongs to the class I-like SAM-binding methyltransferase superfamily. TrmB family.

It carries out the reaction guanosine(46) in tRNA + S-adenosyl-L-methionine = N(7)-methylguanosine(46) in tRNA + S-adenosyl-L-homocysteine. It participates in tRNA modification; N(7)-methylguanine-tRNA biosynthesis. In terms of biological role, catalyzes the formation of N(7)-methylguanine at position 46 (m7G46) in tRNA. The sequence is that of tRNA (guanine-N(7)-)-methyltransferase from Mycoplasmopsis pulmonis (strain UAB CTIP) (Mycoplasma pulmonis).